Reading from the N-terminus, the 239-residue chain is ATP synthase subunit a (239 aa).

5 helical membrane passes run 27 to 47, 86 to 106, 125 to 145, 190 to 210, and 211 to 231; these read GQVFLSSWIVIGALLAVVVLG, LPFIGTLFLFIFVSNWGGALI, INTTVAMALLVSLAFFYAGLS, LAVAVLASLVPLLVPLPVMLL, and GLFTSAIQALIFATLAAFYIG.

The protein belongs to the ATPase A chain family. In terms of assembly, F-type ATPases have 2 components, CF(1) - the catalytic core - and CF(0) - the membrane proton channel. CF(1) has five subunits: alpha(3), beta(3), gamma(1), delta(1), epsilon(1). CF(0) has four main subunits: a, b, b' and c.

The protein localises to the cellular thylakoid membrane. Functionally, key component of the proton channel; it plays a direct role in the translocation of protons across the membrane. The protein is ATP synthase subunit a of Synechococcus sp. (strain RCC307).